The following is a 229-amino-acid chain: NAD(P)H-hydrate epimerase (229 aa).

Positions 10–217 constitute a YjeF N-terminal domain; that stretch reads AINVDLELFN…ALQRKYELNL (208 aa). 60–64 is a (6S)-NADPHX binding site; that stretch reads NNGGD. K(+) is bound by residues Asn-61 and Asp-125. Residues 129-135 and Asp-158 contribute to the (6S)-NADPHX site; that span reads GFSFKPP. Ser-161 lines the K(+) pocket.

It belongs to the NnrE/AIBP family. The cofactor is K(+).

It catalyses the reaction (6R)-NADHX = (6S)-NADHX. It carries out the reaction (6R)-NADPHX = (6S)-NADPHX. Functionally, catalyzes the epimerization of the S- and R-forms of NAD(P)HX, a damaged form of NAD(P)H that is a result of enzymatic or heat-dependent hydration. This is a prerequisite for the S-specific NAD(P)H-hydrate dehydratase to allow the repair of both epimers of NAD(P)HX. In Drosophila virilis (Fruit fly), this protein is NAD(P)H-hydrate epimerase.